The following is a 291-amino-acid chain: Pituitary-specific positive transcription factor 1 (291 aa).

The short motif at 5-13 is the 9aaTAD element; sequence PFTSADTFI. Positions 124-198 constitute a POU-specific domain; the sequence is MDSPEIRELE…ILSKWLEEAE (75 aa). The homeobox DNA-binding region spans 214-273; the sequence is KRKRRTTISIAAKDALERHFGEQNKPSSQEILRMAEELNLEKEVVRVWFCNRRQREKRVK.

It belongs to the POU transcription factor family. Class-1 subfamily. As to quaternary structure, interacts with PITX1. Interacts with LHX3. Interacts with ELK1.

The protein localises to the nucleus. In terms of biological role, transcription factor involved in the specification of the lactotrope, somatotrope, and thyrotrope phenotypes in the developing anterior pituitary. Activates growth hormone and prolactin genes. Specifically binds to the consensus sequence 5'-TAAAT-3'. The protein is Pituitary-specific positive transcription factor 1 (POU1F1) of Sus scrofa (Pig).